Here is a 315-residue protein sequence, read N- to C-terminus: Cysteine synthase (315 aa).

Hydrogen sulfide-binding residues include Asn8 and Arg35. The residue at position 42 (Lys42) is an N6-(pyridoxal phosphate)lysine. Pyridoxal 5'-phosphate is bound by residues Asn72 and 177 to 181 (GTGGT). Residue Leu269 participates in hydrogen sulfide binding. Residue Ser273 coordinates pyridoxal 5'-phosphate.

It belongs to the cysteine synthase/cystathionine beta-synthase family. In terms of assembly, homodimer. Pyridoxal 5'-phosphate is required as a cofactor.

It catalyses the reaction O-acetyl-L-serine + hydrogen sulfide = L-cysteine + acetate. Its pathway is amino-acid biosynthesis; L-cysteine biosynthesis; L-cysteine from L-serine: step 2/2. The chain is Cysteine synthase (cysK) from Buchnera aphidicola subsp. Acyrthosiphon pisum (strain APS) (Acyrthosiphon pisum symbiotic bacterium).